A 529-amino-acid chain; its full sequence is Cytochrome P450 monooxygenase 136 (529 aa).

Residues 9–29 form a helical membrane-spanning segment; the sequence is SPLALAVLSIATCQLALVWWY. Heme is bound at residue Cys-447.

Belongs to the cytochrome P450 family. Heme is required as a cofactor.

The protein resides in the membrane. The protein operates within secondary metabolite biosynthesis. Functionally, cytochrome P450 monooxygenase that is able to use delta(6)-protoilludene as a substrate to produce delta(6)-protoilludene-5-ol. The chain is Cytochrome P450 monooxygenase 136 from Postia placenta (strain ATCC 44394 / Madison 698-R) (Brown rot fungus).